The following is a 557-amino-acid chain: Inositol-3-phosphate synthase 1 (557 aa).

21 residues coordinate NAD(+): glycine 67, glycine 68, asparagine 69, asparagine 70, aspartate 141, serine 177, valine 178, glutamine 188, arginine 191, threonine 228, alanine 229, asparagine 230, threonine 231, glycine 278, serine 279, aspartate 303, serine 306, asparagine 337, asparagine 338, aspartate 339, and lysine 352. Serine 279 carries the post-translational modification Phosphoserine. The residue at position 357 (serine 357) is a Phosphoserine. The NAD(+) site is built by glycine 390, aspartate 391, aspartate 419, and serine 420. The disordered stretch occupies residues 512–557 (GPGIKPGEVVATSPLPCKKEPTPATNGCTGDANGHPQAPTPKLSTA). Serine 524 bears the Phosphoserine mark.

It belongs to the myo-inositol 1-phosphate synthase family. NAD(+) serves as cofactor. In testis, it is expressed in Sertoli cells. Highly expressed in 2 types of germ cells, pachytene spermatocytes and round spermatids.

The protein localises to the cytoplasm. It catalyses the reaction D-glucose 6-phosphate = 1D-myo-inositol 3-phosphate. The protein operates within polyol metabolism; myo-inositol biosynthesis; myo-inositol from D-glucose 6-phosphate: step 1/2. Key enzyme in myo-inositol biosynthesis pathway that catalyzes the conversion of glucose 6-phosphate to 1-myo-inositol 1-phosphate in a NAD-dependent manner. Rate-limiting enzyme in the synthesis of all inositol-containing compounds. In Mus musculus (Mouse), this protein is Inositol-3-phosphate synthase 1 (Isyna1).